A 403-amino-acid chain; its full sequence is Heptahelical transmembrane protein ADIPOR3 (403 aa).

Topologically, residues 1-73 (MAAAAGEEVE…LSAFSIHNET (73 aa)) are cytoplasmic. Residues 74-94 (LNVWTHLIGFFIFLVLTIYTA) form a helical membrane-spanning segment. Over 95–209 (TQVPNVVDLQ…QLIRPIPRWP (115 aa)) the chain is Extracellular. The helical transmembrane segment at 210-230 (FYAFLGGAMFCLLASSTCHLL) threads the bilayer. Topologically, residues 231–246 (SCHSRRLAYIMLRLDY) are cytoplasmic. A helical membrane pass occupies residues 247–267 (AGIAALIATSFYPPVYYSFMC). The Extracellular segment spans residues 268–274 (YPFFCNL). A helical membrane pass occupies residues 275 to 295 (YLSCITILGVATIAFSLLPVF). Residues 296–306 (QNPEFRTIRAC) lie on the Cytoplasmic side of the membrane. Residues 307–327 (LFFGMGASGVIPVIHKLILFW) form a helical membrane-spanning segment. Topologically, residues 328-331 (HQPE) are extracellular. Residues 332–352 (ALHTTAYEVLMGLFYGIGALV) traverse the membrane as a helical segment. Residues 353–374 (YATRVPERWMPGKFDIAGHSHQ) are Cytoplasmic-facing. Residues 375-395 (LFHVLVVAGAYTHYHSGLVYL) traverse the membrane as a helical segment. Residues 396–403 (KWRDVQGC) lie on the Extracellular side of the membrane.

It belongs to the ADIPOR family.

Its subcellular location is the membrane. May play a role in abiotic stress response. This Oryza sativa subsp. japonica (Rice) protein is Heptahelical transmembrane protein ADIPOR3 (ADIPOR3).